The sequence spans 457 residues: Transcription termination factor Rho (457 aa).

The tract at residues 1-23 (MNTTNKQLTEELNNTESNNDHND) is disordered. A Rho RNA-BD domain is found at 77–152 (LIVGEGVLEV…LKVNRVNFED (76 aa)). ATP contacts are provided by residues 200–205 (GKGQRA), 212–217 (RTGKTV), and Arg243.

Belongs to the Rho family. As to quaternary structure, homohexamer. The homohexamer assembles into an open ring structure.

Its function is as follows. Facilitates transcription termination by a mechanism that involves Rho binding to the nascent RNA, activation of Rho's RNA-dependent ATPase activity, and release of the mRNA from the DNA template. The sequence is that of Transcription termination factor Rho from Rickettsia prowazekii (strain Madrid E).